Reading from the N-terminus, the 573-residue chain is Sulfite oxidase, mitochondrial (573 aa).

Residues 1-34 (MRLLRPSWAGLLRGRHHQHQRHHRRLLLTTSRGS) constitute a mitochondrion transit peptide. A compositionally biased stretch (basic residues) spans 14 to 26 (GRHHQHQRHHRRL). Residues 14–50 (GRHHQHQRHHRRLLLTTSRGSNGEREEQQHSQWSSPG) form a disordered region. The region spanning 108–186 (LPTYRAEEVE…LEGFRIGNLE (79 aa)) is the Cytochrome b5 heme-binding domain. Positions 144 and 168 each coordinate heme b. The interval 190–199 (VTNVDDELGS) is hinge. A moco domain region spans residues 200 to 423 (PWSQEPQRHA…DSHWQQNDYK (224 aa)). Mo-molybdopterin is bound by residues 240–244 (YVRNH), Cys-287, Asp-344, His-383, Arg-388, and 399–401 (NVK). The segment at 424-567 (GFSPSTDWDT…RGVLANAYHK (144 aa)) is homodimerization.

The cofactor is heme b. Mo-molybdopterin serves as cofactor. Expressed in the ensheathing glia with relatively weak expression in the CNS cortex (at protein level).

The protein localises to the mitochondrion intermembrane space. It catalyses the reaction sulfite + O2 + H2O = sulfate + H2O2. It participates in energy metabolism; sulfur metabolism. Required in ensheathing glial cells for normal larval locomotion. Oxidizes sulfite which is required to maintain glutamate homeostasis and as a consequence, neuronal network function. The chain is Sulfite oxidase, mitochondrial from Drosophila melanogaster (Fruit fly).